The primary structure comprises 82 residues: MTHKREIQGNVVKISGDKTASIVVERRVMHPRYHKVVKRFKKYLVHDERNELKVGDEIVAIECRPLSKTKSYRLKSVVVGVK.

The protein belongs to the universal ribosomal protein uS17 family. Part of the 30S ribosomal subunit.

One of the primary rRNA binding proteins, it binds specifically to the 5'-end of 16S ribosomal RNA. In Sulfurimonas denitrificans (strain ATCC 33889 / DSM 1251) (Thiomicrospira denitrificans (strain ATCC 33889 / DSM 1251)), this protein is Small ribosomal subunit protein uS17.